The sequence spans 336 residues: Anthranilate phosphoribosyltransferase (336 aa).

5-phospho-alpha-D-ribose 1-diphosphate is bound by residues Gly-79, 82 to 83 (GD), Thr-87, 89 to 92 (NISS), 107 to 115 (KHGNRSVSS), and Ser-119. Residue Gly-79 coordinates anthranilate. Ser-91 lines the Mg(2+) pocket. An anthranilate-binding site is contributed by Asn-110. Arg-165 serves as a coordination point for anthranilate. Residues Asp-223 and Glu-224 each contribute to the Mg(2+) site.

The protein belongs to the anthranilate phosphoribosyltransferase family. In terms of assembly, homodimer. Mg(2+) is required as a cofactor.

The enzyme catalyses N-(5-phospho-beta-D-ribosyl)anthranilate + diphosphate = 5-phospho-alpha-D-ribose 1-diphosphate + anthranilate. Its pathway is amino-acid biosynthesis; L-tryptophan biosynthesis; L-tryptophan from chorismate: step 2/5. Functionally, catalyzes the transfer of the phosphoribosyl group of 5-phosphorylribose-1-pyrophosphate (PRPP) to anthranilate to yield N-(5'-phosphoribosyl)-anthranilate (PRA). The chain is Anthranilate phosphoribosyltransferase from Tolumonas auensis (strain DSM 9187 / NBRC 110442 / TA 4).